A 458-amino-acid chain; its full sequence is Argininosuccinate lyase (458 aa).

It belongs to the lyase 1 family. Argininosuccinate lyase subfamily.

Its subcellular location is the cytoplasm. It catalyses the reaction 2-(N(omega)-L-arginino)succinate = fumarate + L-arginine. It functions in the pathway amino-acid biosynthesis; L-arginine biosynthesis; L-arginine from L-ornithine and carbamoyl phosphate: step 3/3. The polypeptide is Argininosuccinate lyase (Actinobacillus pleuropneumoniae serotype 5b (strain L20)).